Here is a 454-residue protein sequence, read N- to C-terminus: Divalent metal cation transporter MntH (454 aa).

The interval 1–21 is disordered; that stretch reads MSDAEATAPRSSWRFAGRDED. Helical transmembrane passes span 45–65, 78–98, 122–142, 153–173, 182–202, 220–240, 275–295, 312–332, 368–388, 389–409, and 426–446; these read LFAF…PGNW, TLLF…ALAA, FVLW…EVIG, IPLI…LLLM, AFVI…IFVA, IVTN…TVMP, IALM…AVAF, LLSP…ALLA, GLAI…GTGQ, LLVF…VPLV, and GVAA…FKLL.

The protein belongs to the NRAMP family.

Its subcellular location is the cell inner membrane. H(+)-stimulated, divalent metal cation uptake system. The chain is Divalent metal cation transporter MntH from Mesorhizobium japonicum (strain LMG 29417 / CECT 9101 / MAFF 303099) (Mesorhizobium loti (strain MAFF 303099)).